Here is a 1544-residue protein sequence, read N- to C-terminus: GATOR complex protein Iml1 (1544 aa).

Disordered stretches follow at residues 615–649 and 1037–1072; these read QAVPAKPTQAGQQRPLQQTQSNNNNDQEDYGCENG and RRHSTSIISRPQPNQGLTNSPFRERVGSNRLPEKRP. Polar residues-rich tracts occupy residues 623–639 and 1041–1057; these read QAGQQRPLQQTQSNNNN and TSIISRPQPNQGLTNSP. A compositionally biased stretch (basic and acidic residues) spans 1058-1072; the sequence is FRERVGSNRLPEKRP.

This sequence belongs to the IML1 family. In terms of assembly, component of the GATOR complex consisting of mio, Nup44A/Seh1, Im11, Nplr3, Nplr2, Wdr24, Wdr59 and Sec13. Within the GATOR complex, probable component of the GATOR1 subcomplex which is likely composed of Iml1, Nplr2 and Nplr3.

Functionally, an essential component of the GATOR subcomplex GATOR1 which functions as an inhibitor of the amino acid-sensing branch of the TORC1 signaling pathway. The two GATOR subcomplexes, GATOR1 and GATOR2, regulate the TORC1 pathway in order to mediate metabolic homeostasis, female gametogenesis and the response to amino acid limitation and complete starvation. The function of GATOR1 in negatively regulating the TORC1 pathway is essential for maintaining baseline levels of TORC1 activity under nutrient rich conditions, and for promoting survival during amino acid or complete starvation by inhibiting TORC1-dependent cell growth and promoting catabolic metabolism and autophagy. GATOR1 and GATOR2 act at different stages of oogenesis to regulate TORC1 in order to control meiotic entry and promote oocyte growth and development. After exactly four mitotic cyst divisions, the GATOR1 complex members (Iml1, Nprl2 and Nprl3) down-regulate TORC1 to slow cellular metabolism and promote the mitotic/meiotic transition. At later stages of oogenesis, the mio and Nup44A components of the GATOR2 complex inhibit GATOR1 and thus activate TORC1 to promote meiotic progression, and drive oocyte growth and development. The chain is GATOR complex protein Iml1 from Drosophila melanogaster (Fruit fly).